Here is a 287-residue protein sequence, read N- to C-terminus: MSTINLPLNLTVRVHPVVLFQIVDAYERRNADSERVIGTLLGSVDKGVVEVTNCFCVPHKEHADQVEAELGYASDLYDLNRRVNPSENIVGWWATGQEVTNHSSVIHEYYARECNNPIHLTLDTSLSAARMGIKAYVCVSLGVPGGKTGCMFTPINVEISSYEPEVVGLQLCSKTIGVQQNASRPRTVSPMLDLAQITEASDKLLTLLGEVLNYVEDVLAEKQQPDNSVGRALLDLIHSVPNMTSDQFAQMFNSNVKDLLMVVTLSQLIKTQLQLNEKLTSLTSFIN.

The MPN domain occupies 12–142 (VRVHPVVLFQ…IKAYVCVSLG (131 aa)).

The protein belongs to the eIF-3 subunit F family. As to quaternary structure, component of the eukaryotic translation initiation factor 3 (eIF-3) complex.

Its subcellular location is the cytoplasm. Its function is as follows. Component of the eukaryotic translation initiation factor 3 (eIF-3) complex, which is involved in protein synthesis of a specialized repertoire of mRNAs and, together with other initiation factors, stimulates binding of mRNA and methionyl-tRNAi to the 40S ribosome. The eIF-3 complex specifically targets and initiates translation of a subset of mRNAs involved in cell proliferation. This is Eukaryotic translation initiation factor 3 subunit F from Aedes aegypti (Yellowfever mosquito).